We begin with the raw amino-acid sequence, 249 residues long: Phosphomannomutase 2 (249 aa).

Aspartate 12 acts as the Nucleophile in catalysis. Positions 12 and 14 each coordinate Mg(2+). Residue aspartate 14 is the Proton donor/acceptor of the active site. Positions 21, 123, 134, 141, 179, and 181 each coordinate alpha-D-mannose 1-phosphate. Aspartate 209 contributes to the Mg(2+) binding site.

Belongs to the eukaryotic PMM family. Homodimer.

Its subcellular location is the cytoplasm. It carries out the reaction alpha-D-mannose 1-phosphate = D-mannose 6-phosphate. It participates in nucleotide-sugar biosynthesis; GDP-alpha-D-mannose biosynthesis; alpha-D-mannose 1-phosphate from D-fructose 6-phosphate: step 2/2. In terms of biological role, involved in the synthesis of the GDP-mannose and dolichol-phosphate-mannose required for a number of critical mannosyl transfer reactions. This chain is Phosphomannomutase 2 (pmmB), found in Dictyostelium discoideum (Social amoeba).